Consider the following 524-residue polypeptide: MAAVAVAVREESRSEMKTELSPRPGAAGRELTQEEKLQLRKEKKQQKKKRKEEKGADQEIGSAVSAAQRQDPVRELQGTGSQLGGTTGEKLPAGRSKAELRAERRAKQEAERALKQARKGEQGGPSPQACPSTAGEATSGVKRVPEHTQADDPTLLRRLLRKPDRQQVPTRKDYGSKVSLFSHLPQYSRQSSLTQYMSIPSSVIHPAMVRLGLQYSQGLVSGSNARCIALLHALQQVIQDYTTPPNEELSRDLVNKLKPYISFLTQCRPMSASMCNAIKFFNKEVTGMSSSKREEEAKSELKEAIDRYVQEKIVLASQAISRFASKKISDGDVILVYGCSSLVSRILQEAWVEGRRFRVVVVDSRPRLEGRHMLHCLVRAGVPTSYLLIPAASYVLPEVSKVLLGAHALLANGSVMSRVGTAQLALVARAHNVPVLVCCETYKFCERVQTDAFVSNELDDPDDLQCKRGDQVTLANWQNNSSLRLLNLVYDVTPPELVDLVITELGMIPCSSVPVVLRVKSSDQ.

Positions 1 to 174 (MAAVAVAVRE…RQQVPTRKDY (174 aa)) are disordered. Position 2 is an N-acetylalanine (alanine 2). 2 stretches are compositionally biased toward basic and acidic residues: residues 8 to 20 (VREE…KTEL) and 31 to 40 (LTQEEKLQLR). Serine 12 is modified (phosphoserine). The segment covering 41 to 51 (KEKKQQKKKRK) has biased composition (basic residues). The residue at position 86 (threonine 86) is a Phosphothreonine. Composition is skewed to basic and acidic residues over residues 96-121 (SKAE…RKGE) and 161-174 (RKPD…RKDY). The may bind the chemical integrated stress response (ISR) inhibitor ISRIB stretch occupies residues 171–180 (RKDYGSKVSL).

It belongs to the eIF-2B alpha/beta/delta subunits family. Component of the translation initiation factor 2B (eIF2B) complex which is a heterodecamer of two sets of five different subunits: alpha, beta, gamma, delta and epsilon. Subunits alpha, beta and delta comprise a regulatory subcomplex and subunits epsilon and gamma comprise a catalytic subcomplex. Within the complex, the hexameric regulatory complex resides at the center, with the two heterodimeric catalytic subcomplexes bound on opposite sides.

It localises to the cytoplasm. Its subcellular location is the cytosol. Activated by the chemical integrated stress response (ISR) inhibitor ISRIB which stimulates guanine nucleotide exchange factor activity for both phosphorylated and unphosphorylated eIF2. Its function is as follows. Acts as a component of the translation initiation factor 2B (eIF2B) complex, which catalyzes the exchange of GDP for GTP on eukaryotic initiation factor 2 (eIF2) gamma subunit. Its guanine nucleotide exchange factor activity is repressed when bound to eIF2 complex phosphorylated on the alpha subunit, thereby limiting the amount of methionyl-initiator methionine tRNA available to the ribosome and consequently global translation is repressed. The sequence is that of Translation initiation factor eIF2B subunit delta (Eif2b4) from Rattus norvegicus (Rat).